A 284-amino-acid chain; its full sequence is Acetylglutamate kinase (284 aa).

Substrate-binding positions include 66-67 (GG), Arg-88, and Asn-179.

The protein belongs to the acetylglutamate kinase family. ArgB subfamily.

The protein localises to the cytoplasm. The enzyme catalyses N-acetyl-L-glutamate + ATP = N-acetyl-L-glutamyl 5-phosphate + ADP. It participates in amino-acid biosynthesis; L-arginine biosynthesis; N(2)-acetyl-L-ornithine from L-glutamate: step 2/4. Its function is as follows. Catalyzes the ATP-dependent phosphorylation of N-acetyl-L-glutamate. This Actinobacillus pleuropneumoniae serotype 7 (strain AP76) protein is Acetylglutamate kinase.